The chain runs to 135 residues: Ribosome-binding factor A (135 aa).

The protein belongs to the RbfA family. As to quaternary structure, monomer. Binds 30S ribosomal subunits, but not 50S ribosomal subunits or 70S ribosomes.

The protein localises to the cytoplasm. Its function is as follows. One of several proteins that assist in the late maturation steps of the functional core of the 30S ribosomal subunit. Associates with free 30S ribosomal subunits (but not with 30S subunits that are part of 70S ribosomes or polysomes). Required for efficient processing of 16S rRNA. May interact with the 5'-terminal helix region of 16S rRNA. This chain is Ribosome-binding factor A, found in Novosphingobium aromaticivorans (strain ATCC 700278 / DSM 12444 / CCUG 56034 / CIP 105152 / NBRC 16084 / F199).